The chain runs to 598 residues: Chromodomain Y-like protein (598 aa).

Residues 1-76 (MTFQASHRSA…VDKRKNKKGK (76 aa)) are disordered. Positions 44 to 56 (PSISVSSEQSGAQ) are enriched in polar residues. A Chromo domain is found at 61–121 (LQVERIVDKR…RHTEKQKEST (61 aa)). Residues 61–309 (LQVERIVDKR…NIQTSVTGVT (249 aa)) form an interaction with EZH2 region. The segment covering 65–76 (RIVDKRKNKKGK) has biased composition (basic and acidic residues). S88 is modified (phosphoserine). Residues 112 to 121 (RHTEKQKEST) show a composition bias toward basic and acidic residues. The interval 112 to 149 (RHTEKQKESTLTRTNRTSPNNARKQISRSTNSNFSKTS) is disordered. The span at 122 to 149 (LTRTNRTSPNNARKQISRSTNSNFSKTS) shows a compositional bias: polar residues. K135 carries the post-translational modification N6,N6,N6-trimethyllysine; by EHMT2; alternate. N6,N6-dimethyllysine; by EHMT2; alternate is present on K135. At K135 the chain carries N6-methyllysine; by EHMT2; alternate. A phosphoserine mark is found at S170, S201, and S216. Positions 204-226 (KSRTAVDGFQSESPEKLDPVEQG) are disordered. The interval 362–594 (SENNSLNPEV…DSMLKYLQRK (233 aa)) is acetyl-CoA-binding domain.

As to quaternary structure, forms multimers and multimerization is required for stable binding to chromatin. Interacts with HDAC1 and HDAC2 via its C-terminal acetyl-CoA-binding domain. Interacts with EZH2, EED, SUZ12, REST, EHMT1 and EHMT2. Part of a complex containing at least CDYL, REST, WIZ, SETB1, EHMT1 and EHMT2. Part of a complex containing at least CDYL, MIER1, MIER2, HDAC1 and HDAC2. Interacts with CHAF1A and CHAF1B; bridging the CAF-1 complex to the MCM2-7 (MCM) complex. Interacts with MCM3 and MCM5; bridging the CAF-1 complex to the MCM2-7 (MCM) complex. Recruited to Xist RNA-coated X chromosome. Interacts with EHMT2 and PRDM9; interaction only takes place when PRDM9 is bound to hotspot DNA. In terms of tissue distribution, expressed in the hippocampus with reduced expression in epileptic tissue compared to normal adjacent tissue (at protein level). Ubiquitous. Expressed at moderate levels in all tissues examined. Isoform 2: Most abundantly expressed isoform.

It localises to the nucleus. Its subcellular location is the chromosome. It carries out the reaction 3-hydroxybutanoyl-CoA = (2E)-butenoyl-CoA + H2O. Functionally, chromatin reader protein that recognizes and binds histone H3 trimethylated at 'Lys-9', dimethylated at 'Lys-27' and trimethylated at 'Lys-27' (H3K9me3, H3K27me2 and H3K27me3, respectively). Part of multimeric repressive chromatin complexes, where it is required for transmission and restoration of repressive histone marks, thereby preserving the epigenetic landscape. Required for chromatin targeting and maximal enzymatic activity of Polycomb repressive complex 2 (PRC2); acts as a positive regulator of PRC2 activity by bridging the pre-existing histone H3K27me3 and newly recruited PRC2 on neighboring nucleosomes. Acts as a corepressor for REST by facilitating histone-lysine N-methyltransferase EHMT2 recruitment and H3K9 dimethylation at REST target genes for repression. Involved in X chromosome inactivation in females: recruited to Xist RNA-coated X chromosome and facilitates propagation of H3K9me2 by anchoring EHMT2. Promotes EZH2 accumulation and H3K27me3 methylation at DNA double strand breaks (DSBs), thereby facilitating transcriptional repression at sites of DNA damage and homology-directed repair of DSBs. Required for neuronal migration during brain development by repressing expression of RHOA. By repressing the expression of SCN8A, contributes to the inhibition of intrinsic neuronal excitability and epileptogenesis. In addition to acting as a chromatin reader, acts as a hydro-lyase. Shows crotonyl-coA hydratase activity by mediating the conversion of crotonyl-CoA ((2E)-butenoyl-CoA) to beta-hydroxybutyryl-CoA (3-hydroxybutanoyl-CoA), thereby acting as a negative regulator of histone crotonylation. Histone crotonylation is required during spermatogenesis; down-regulation of histone crotonylation by CDYL regulates the reactivation of sex chromosome-linked genes in round spermatids and histone replacement in elongating spermatids. By regulating histone crotonylation and trimethylation of H3K27, may be involved in stress-induced depression-like behaviors, possibly by regulating VGF expression. Its function is as follows. Not able to recognize and bind histone H3K9me3, histone H3K27me2 and histone H3K27me3, due to the presence of a N-terminal extension that inactivates the chromo domain. Not able to recognize and bind histone H3K9me3, histone H3K27me2 and histone H3K27me3, due to the absence of the chromo domain. Acts as a negative regulator of isoform 2 by displacing isoform 2 from chromatin. The protein is Chromodomain Y-like protein of Homo sapiens (Human).